Here is a 387-residue protein sequence, read N- to C-terminus: BTB and MATH domain-containing protein 38 (387 aa).

The 126-residue stretch at 79-204 (EGMLKLEIPN…NEMVTVTARV (126 aa)) folds into the MATH domain. Positions 228-295 (CDMTLVINKQ…IYPCHKPITS (68 aa)) constitute a BTB domain.

This chain is BTB and MATH domain-containing protein 38 (bath-38), found in Caenorhabditis elegans.